The chain runs to 61 residues: Small ribosomal subunit protein uS14 (61 aa).

Zn(2+) is bound by residues Cys24, Cys27, Cys40, and Cys43.

This sequence belongs to the universal ribosomal protein uS14 family. Zinc-binding uS14 subfamily. In terms of assembly, part of the 30S ribosomal subunit. Contacts proteins S3 and S10. It depends on Zn(2+) as a cofactor.

Its function is as follows. Binds 16S rRNA, required for the assembly of 30S particles and may also be responsible for determining the conformation of the 16S rRNA at the A site. In Campylobacter jejuni subsp. jejuni serotype O:6 (strain 81116 / NCTC 11828), this protein is Small ribosomal subunit protein uS14.